Consider the following 136-residue polypeptide: Inner membrane protein YbhQ (136 aa).

Residues 1-12 (MKWQQRVRVATG) lie on the Cytoplasmic side of the membrane. Residues 13–33 (LSCWQIMLHLLVVALLVVGWM) form a helical membrane-spanning segment. At 34 to 37 (SKTL) the chain is on the periplasmic side. Residues 38–58 (VHVGVGLCALYCVTVVMMLVF) form a helical membrane-spanning segment. Residues 59-71 (QRHPEQRWREVAD) lie on the Cytoplasmic side of the membrane. A helical membrane pass occupies residues 72–92 (VLEELTTTWYFGAALIVLWLL). Over 93 to 99 (SRVLENN) the chain is Periplasmic. A helical membrane pass occupies residues 100-120 (FLLAIAGLAILAGPAVVSLLA). Topologically, residues 121–136 (KDKKLHHLTSKHRVRR) are cytoplasmic.

It localises to the cell inner membrane. The protein is Inner membrane protein YbhQ (ybhQ) of Escherichia coli O157:H7.